A 209-amino-acid polypeptide reads, in one-letter code: Outer-membrane lipoprotein carrier protein (209 aa).

Residues 1 to 21 (MKLLKLLSVAALSAASMMANA) form the signal peptide.

This sequence belongs to the LolA family. Monomer.

The protein resides in the periplasm. In terms of biological role, participates in the translocation of lipoproteins from the inner membrane to the outer membrane. Only forms a complex with a lipoprotein if the residue after the N-terminal Cys is not an aspartate (The Asp acts as a targeting signal to indicate that the lipoprotein should stay in the inner membrane). In Hahella chejuensis (strain KCTC 2396), this protein is Outer-membrane lipoprotein carrier protein.